The following is a 508-amino-acid chain: 2'-5'-oligoadenylate synthase-like protein 2 (508 aa).

An ATP-binding site is contributed by Ser69. Asp81, Asp83, and Asp154 together coordinate Mg(2+). ATP-binding residues include Arg213 and Lys216. The region spanning 435–473 (ILVFVKYPGGQSKPFTIDPDDTILDLKEKIEDAGGPCAE) is the Ubiquitin-like domain.

It belongs to the 2-5A synthase family. Mg(2+) serves as cofactor. Strongly expressed in spleen dendritic cells, whereas, in bone marrow-derived dendritic cells, the amount increases during the maturation process. Expressed in many organs, the highest levels being in thymus, lung, and bone marrow.

The enzyme catalyses 3 ATP = 5'-triphosphoadenylyl-(2'-&gt;5')-adenylyl-(2'-&gt;5')-adenosine + 2 diphosphate. Its activity is regulated as follows. Produced as a latent enzyme which is activated by dsRNA generated during the course of viral infection. The dsRNA activator must be at least 15 nucleotides long, and no modification of the 2'-hydroxyl group is tolerated. ssRNA or dsDNA do not act as activators. Interferon-induced, dsRNA-activated antiviral enzyme which plays a critical role in cellular innate antiviral response. Synthesizes oligomers of 2'-5'-oligoadenylates (2-5A) from ATP which then bind to the inactive monomeric form of ribonuclease L (RNase L) leading to its dimerization and subsequent activation. Activation of RNase L leads to degradation of cellular as well as viral RNA, resulting in the inhibition of protein synthesis, thus terminating viral replication. Can mediate the antiviral effect via the classical RNase L-dependent pathway or an alternative antiviral pathway independent of RNase L. The sequence is that of 2'-5'-oligoadenylate synthase-like protein 2 (Oasl2) from Mus musculus (Mouse).